The chain runs to 400 residues: Nicotinate phosphoribosyltransferase (400 aa).

Residue H220 is modified to Phosphohistidine; by autocatalysis.

The protein belongs to the NAPRTase family. Post-translationally, transiently phosphorylated on a His residue during the reaction cycle. Phosphorylation strongly increases the affinity for substrates and increases the rate of nicotinate D-ribonucleotide production. Dephosphorylation regenerates the low-affinity form of the enzyme, leading to product release.

It catalyses the reaction nicotinate + 5-phospho-alpha-D-ribose 1-diphosphate + ATP + H2O = nicotinate beta-D-ribonucleotide + ADP + phosphate + diphosphate. Its pathway is cofactor biosynthesis; NAD(+) biosynthesis; nicotinate D-ribonucleotide from nicotinate: step 1/1. Functionally, catalyzes the synthesis of beta-nicotinate D-ribonucleotide from nicotinate and 5-phospho-D-ribose 1-phosphate at the expense of ATP. The chain is Nicotinate phosphoribosyltransferase from Enterobacter sp. (strain 638).